A 497-amino-acid chain; its full sequence is MTSSTTSSTDTAVLVLAAGAGTRMRSDIPKVLHTLGGRSMLAHALHTVAKVAPQHLVVVLGHDRERIAPAVEALATDLGRPIDVAIQDQQLGTGHAAECGLAALPEDFTGVVVVTAGDVPLLDADTMADLLATHGSAAATVLTTTVDDPTGYGRILRTQDNEVTSIVEQADASPSQRAIREVNAGVYAFDITALRSALRRLRSDNAQHELYLTDVIAIFRQDGLSVRARHVDDSALVAGVNDRVQLAALGAELNRRIVTAHQRAGVTVIDPGSTWIDVDVTIGRDTVIRPGTQLLGRTRVGGRCDVGPDTTLSDVTVGDGASVVRTHGSESLIGAGATVGPFTYLRPGTALGAEGKLGAFVETKNATIGAGTKVPHLTYVGDADIGEHSNIGASSVFVNYDGETKNRTTIGSHVRTGSDTMFVAPVTVGDGAYTGAGTVIRRNVPPGALAVSAGSQRNIEGWVVRKRPGSAAARAAERASGEAAEQALGHHDDSQGS.

Positions Met-1–Arg-243 are pyrophosphorylase. UDP-N-acetyl-alpha-D-glucosamine is bound by residues Leu-16–Gly-19, Lys-30, Gln-87, and Gly-92–Thr-93. Residue Asp-118 participates in Mg(2+) binding. UDP-N-acetyl-alpha-D-glucosamine is bound by residues Gly-153, Glu-168, Asn-183, and Asn-241. Asn-241 provides a ligand contact to Mg(2+). Residues Val-244–Ala-264 are linker. The segment at Gly-265 to Ser-497 is N-acetyltransferase. 2 residues coordinate UDP-N-acetyl-alpha-D-glucosamine: Arg-346 and Lys-364. The active-site Proton acceptor is the His-376. Residues Tyr-379 and Asn-390 each contribute to the UDP-N-acetyl-alpha-D-glucosamine site. Residues Ala-393, Asn-399–Tyr-400, Ser-418, and Ala-436 each bind acetyl-CoA. The tract at residues Ala-473–Ser-497 is disordered. Basic and acidic residues predominate over residues Leu-488 to Ser-497.

It in the N-terminal section; belongs to the N-acetylglucosamine-1-phosphate uridyltransferase family. The protein in the C-terminal section; belongs to the transferase hexapeptide repeat family. In terms of assembly, homotrimer. Requires Mg(2+) as cofactor.

Its subcellular location is the cytoplasm. The catalysed reaction is alpha-D-glucosamine 1-phosphate + acetyl-CoA = N-acetyl-alpha-D-glucosamine 1-phosphate + CoA + H(+). The enzyme catalyses N-acetyl-alpha-D-glucosamine 1-phosphate + UTP + H(+) = UDP-N-acetyl-alpha-D-glucosamine + diphosphate. Its pathway is nucleotide-sugar biosynthesis; UDP-N-acetyl-alpha-D-glucosamine biosynthesis; N-acetyl-alpha-D-glucosamine 1-phosphate from alpha-D-glucosamine 6-phosphate (route II): step 2/2. It participates in nucleotide-sugar biosynthesis; UDP-N-acetyl-alpha-D-glucosamine biosynthesis; UDP-N-acetyl-alpha-D-glucosamine from N-acetyl-alpha-D-glucosamine 1-phosphate: step 1/1. It functions in the pathway bacterial outer membrane biogenesis; LPS lipid A biosynthesis. Its function is as follows. Catalyzes the last two sequential reactions in the de novo biosynthetic pathway for UDP-N-acetylglucosamine (UDP-GlcNAc). The C-terminal domain catalyzes the transfer of acetyl group from acetyl coenzyme A to glucosamine-1-phosphate (GlcN-1-P) to produce N-acetylglucosamine-1-phosphate (GlcNAc-1-P), which is converted into UDP-GlcNAc by the transfer of uridine 5-monophosphate (from uridine 5-triphosphate), a reaction catalyzed by the N-terminal domain. This chain is Bifunctional protein GlmU, found in Mycobacterium sp. (strain JLS).